The following is a 73-amino-acid chain: UPF0435 protein lmo1707 (73 aa).

It belongs to the UPF0435 family.

In Listeria monocytogenes serovar 1/2a (strain ATCC BAA-679 / EGD-e), this protein is UPF0435 protein lmo1707.